Here is a 43-residue protein sequence, read N- to C-terminus: KNYGNGVHCTKKGCSVDWGYAWTNIANNSVMNGLTGGNAGWHN.

A disulfide bridge links C9 with C14.

The protein resides in the secreted. Its function is as follows. Inhibits a wide spectrum of lactic acid bacteria. The protein is Bacteriocin leucocin-C of Leuconostoc mesenteroides.